Reading from the N-terminus, the 1217-residue chain is ATP-dependent RNA helicase DHX30 (1217 aa).

Asp15 and Ser29 each carry phosphoserine. Residues 76 to 144 (PKNLLNSVIG…QAAAAACQLF (69 aa)) form the DRBM domain. The tract at residues 176 to 223 (WWRPEPTMPPTSWRQLNPENIRPGGPAGLSRSLGREEEEDEEEELEEG) is disordered. Acidic residues predominate over residues 211-223 (EEEEDEEEELEEG). Ser249 and Ser403 each carry phosphoserine. The Helicase ATP-binding domain occupies 467 to 635 (LSAIEQHPVV…FGGCPVIKVP (169 aa)). Position 480–487 (480–487 (GDTGCGKT)) interacts with ATP. The DEAH box motif lies at 582 to 585 (DEVH). Residues 677–850 (LVTDLVLHID…NLVLQAKIHM (174 aa)) form the Helicase C-terminal domain.

The protein belongs to the DEAD box helicase family. DEAH subfamily. Identified in a complex with TFAM and SSBP1. Interacts (via N-terminus) with ZC3HAV1 (via N-terminal domain) in an RNA-independent manner. Found in a complex with GRSF1, DDX28, FASTKD2 and FASTKD5. Phosphorylated on Ser-15. Expressed in the heart, brain, spleen, lung, liver, skeletal muscle, kidney, and testis. Expression is strongest in the testis and brain, while the lowest levels of expression are found in the spleen and lung.

The protein resides in the cytoplasm. It localises to the mitochondrion. It is found in the mitochondrion matrix. Its subcellular location is the mitochondrion nucleoid. The enzyme catalyses ATP + H2O = ADP + phosphate + H(+). In terms of biological role, RNA-dependent helicase. Plays an important role in the assembly of the mitochondrial large ribosomal subunit. Required for optimal function of the zinc-finger antiviral protein ZC3HAV1. Associates with mitochondrial DNA. Involved in nervous system development and differentiation through its involvement in the up-regulation of a number of genes which are required for neurogenesis, including GSC, NCAM1, neurogenin, and NEUROD. In Mus musculus (Mouse), this protein is ATP-dependent RNA helicase DHX30 (Dhx30).